The chain runs to 348 residues: Signal recognition particle receptor FtsY (348 aa).

GTP is bound by residues glycine 143–threonine 150, aspartate 225–arginine 229, and threonine 289–aspartate 292.

It belongs to the GTP-binding SRP family. FtsY subfamily. Part of the signal recognition particle protein translocation system, which is composed of SRP and FtsY.

The protein resides in the cell membrane. It is found in the cytoplasm. It catalyses the reaction GTP + H2O = GDP + phosphate + H(+). Functionally, involved in targeting and insertion of nascent membrane proteins into the cytoplasmic membrane. Acts as a receptor for the complex formed by the signal recognition particle (SRP) and the ribosome-nascent chain (RNC). This Mycoplasma pneumoniae (strain ATCC 29342 / M129 / Subtype 1) (Mycoplasmoides pneumoniae) protein is Signal recognition particle receptor FtsY.